The primary structure comprises 263 residues: Putative SNAP25 homologous protein SNAP30 (263 aa).

Disordered stretches follow at residues 1–61 (MFGF…LQSQ) and 132–209 (NLGG…DGLS). 2 stretches are compositionally biased toward polar residues: residues 8 to 34 (PGNN…TSSE) and 52 to 61 (FNDSGGLQSQ). Basic and acidic residues predominate over residues 158–173 (KPSKKSENHKEEREKL). The span at 180-194 (RSSSQPALDQPTNAL) shows a compositional bias: polar residues. The segment covering 197–206 (VEQEKAKQDD) has biased composition (basic and acidic residues). Residues 198 to 260 (EQEKAKQDDG…QGANQRARHL (63 aa)) enclose the t-SNARE coiled-coil homology domain.

This sequence belongs to the SNAP-25 family.

It localises to the membrane. Its subcellular location is the cytoplasm. In terms of biological role, vesicle trafficking protein that functions in the secretory pathway. This is Putative SNAP25 homologous protein SNAP30 (SNAP30) from Arabidopsis thaliana (Mouse-ear cress).